The following is a 93-amino-acid chain: Small ribosomal subunit protein uS19 (93 aa).

It belongs to the universal ribosomal protein uS19 family.

Protein S19 forms a complex with S13 that binds strongly to the 16S ribosomal RNA. The polypeptide is Small ribosomal subunit protein uS19 (Micrococcus luteus (strain ATCC 4698 / DSM 20030 / JCM 1464 / CCM 169 / CCUG 5858 / IAM 1056 / NBRC 3333 / NCIMB 9278 / NCTC 2665 / VKM Ac-2230) (Micrococcus lysodeikticus)).